Here is a 97-residue protein sequence, read N- to C-terminus: Small ribosomal subunit protein uS19 (97 aa).

Residues 74–97 (FSPTRRFGGHPDKKAVKGKIEKQG) form a disordered region. Basic and acidic residues predominate over residues 82–97 (GHPDKKAVKGKIEKQG).

The protein belongs to the universal ribosomal protein uS19 family.

In terms of biological role, protein S19 forms a complex with S13 that binds strongly to the 16S ribosomal RNA. This chain is Small ribosomal subunit protein uS19, found in Petrotoga mobilis (strain DSM 10674 / SJ95).